Here is a 171-residue protein sequence, read N- to C-terminus: Protein TIFY 11d (171 aa).

Positions 65–100 constitute a Tify domain; it reads PSAGTAPLTIFYDGRMVVVDDVPAEKAAELMRLAGS. Residues 117–142 carry the Jas motif; it reads PIARKASLQRFLQKRKHRITTTSEPY. The Nuclear localization signal motif lies at 119-126; that stretch reads ARKASLQR.

This sequence belongs to the TIFY/JAZ family. Interacts with BHLH148 and COI1A. Interacts with COI1A, COI1B and COI2 in a coronatine-dependent manner. Coronatine is an analog of jasmonoyl isoleucine (JA-Ile). Ubiquitinated. Increase in jasmonoyl isoleucine (JA-Ile) levels mediates its degradation via COI1A-mediated proteasome pathway.

Its subcellular location is the nucleus. Its function is as follows. Repressor of jasmonate (JA) responses. May act on an initial response of JA-regulated gene expression toward drought tolerance as part of a BHLH148-TIFY11D/JAZ12-COI1A complex. This is Protein TIFY 11d from Oryza sativa subsp. indica (Rice).